We begin with the raw amino-acid sequence, 93 residues long: MARLLALVIGYALSSFVLKLFTVLGVGIFTYVGLTALVDGFLNLLQPMLTGLPSYILDILAIAGVPEALSIVGSALLTRASINSAKAFVGVLT.

A run of 2 helical transmembrane segments spans residues 25-45 and 56-76; these read GVGI…LNLL and ILDI…GSAL.

The protein belongs to the inovirus G6P protein family. Interacts with G3P; this interaction is required for proper integration of G3P and G6P into the virion.

The protein resides in the virion. It is found in the host membrane. Plays essential roles both in the entry of the viral genome into the bacterial host and in budding process. The formation of the G3P-G6P complex termed adsorption complex is essential for correct termination of filamentous phage assembly. In Pseudomonas phage Pf3 (Bacteriophage Pf3), this protein is Head virion protein G6P (VI).